The sequence spans 607 residues: Bifunctional endo-1,4-beta-xylanase A (607 aa).

Residues 1-18 form the signal peptide; that stretch reads MRTIKFFFAVAIATVAKA. The 208-residue stretch at 35 to 242 folds into the GH11 1 domain; that stretch reads NGQTQHKGVA…SSGIADVTKL (208 aa). Residue Glu141 is the Nucleophile of the active site. Glu223 functions as the Proton donor in the catalytic mechanism. Residues 248 to 272 are compositionally biased toward polar residues; the sequence is QKGSNPAPTSTGTVPSSSAGGSTAN. The tract at residues 248–284 is disordered; sequence QKGSNPAPTSTGTVPSSSAGGSTANGKKFTVGNGQNQ. One can recognise a GH11 2 domain in the interval 280–487; sequence NGQNQHKGVN…SSGVADVTLL (208 aa). Residue Glu386 is the Nucleophile of the active site. Glu474 (proton donor) is an active-site residue. A disordered region spans residues 493 to 514; it reads PKGSSPATSAAPRTTTRTTTRT. The segment covering 496-514 has biased composition (low complexity); it reads SSPATSAAPRTTTRTTTRT. 2 CBM10 domains span residues 523-563 and 566-606; these read KCSA…CGCG and QCSS…CGCG.

It belongs to the glycosyl hydrolase 11 (cellulase G) family.

The enzyme catalyses Endohydrolysis of (1-&gt;4)-beta-D-xylosidic linkages in xylans.. It functions in the pathway glycan degradation; xylan degradation. Functionally, hydrolyzes xylans into xylobiose and xylose. This Neocallimastix patriciarum (Rumen fungus) protein is Bifunctional endo-1,4-beta-xylanase A (XYNA).